A 229-amino-acid polypeptide reads, in one-letter code: MGKKYTESVKLVDKNTLYTVQEAIELVTKTSKAKFDETVELAVRLGVDPRHADQQVRGAVVLPHGTGKTVRVLVFAKGDKVNEAQEAGADFVGAEELVEKIQKENWFDFDVVVATPDMMGVVGRLGRVLGPKGLMPNPKSGTVTFDVAKAIADIKAGKVEYRVDKTAIIHVPIGKSSFGEEKLSDNFHVLMEAVVKAKPAAAKGQYIKSVAISSTMGPGIKINPGKVLE.

Belongs to the universal ribosomal protein uL1 family. As to quaternary structure, part of the 50S ribosomal subunit.

In terms of biological role, binds directly to 23S rRNA. The L1 stalk is quite mobile in the ribosome, and is involved in E site tRNA release. Functionally, protein L1 is also a translational repressor protein, it controls the translation of the L11 operon by binding to its mRNA. This Clostridium botulinum (strain ATCC 19397 / Type A) protein is Large ribosomal subunit protein uL1.